The chain runs to 461 residues: Bifunctional protein GlmU (461 aa).

The tract at residues 1–229 is pyrophosphorylase; that stretch reads MEKYVVVLAA…FSESLGVNDR (229 aa). UDP-N-acetyl-alpha-D-glucosamine is bound by residues 8-11, Lys-22, Gln-72, and 77-78; these read LAAG and GT. Position 102 (Asp-102) interacts with Mg(2+). Residues Gly-139, Glu-154, Asn-169, and Asn-227 each contribute to the UDP-N-acetyl-alpha-D-glucosamine site. Asn-227 contributes to the Mg(2+) binding site. The interval 230-250 is linker; that stretch reads VALAQATKTMQRRINEAHMRD. Positions 251–461 are N-acetyltransferase; it reads GVSFIDPDTA…LPLSKDKDWE (211 aa). UDP-N-acetyl-alpha-D-glucosamine-binding residues include Arg-332 and Lys-350. The active-site Proton acceptor is the His-362. UDP-N-acetyl-alpha-D-glucosamine contacts are provided by Tyr-365 and Asn-376. Acetyl-CoA contacts are provided by residues 385-386, Ala-422, and Arg-439; that span reads NY.

The protein in the N-terminal section; belongs to the N-acetylglucosamine-1-phosphate uridyltransferase family. It in the C-terminal section; belongs to the transferase hexapeptide repeat family. Homotrimer. Requires Mg(2+) as cofactor.

It localises to the cytoplasm. It carries out the reaction alpha-D-glucosamine 1-phosphate + acetyl-CoA = N-acetyl-alpha-D-glucosamine 1-phosphate + CoA + H(+). It catalyses the reaction N-acetyl-alpha-D-glucosamine 1-phosphate + UTP + H(+) = UDP-N-acetyl-alpha-D-glucosamine + diphosphate. The protein operates within nucleotide-sugar biosynthesis; UDP-N-acetyl-alpha-D-glucosamine biosynthesis; N-acetyl-alpha-D-glucosamine 1-phosphate from alpha-D-glucosamine 6-phosphate (route II): step 2/2. Its pathway is nucleotide-sugar biosynthesis; UDP-N-acetyl-alpha-D-glucosamine biosynthesis; UDP-N-acetyl-alpha-D-glucosamine from N-acetyl-alpha-D-glucosamine 1-phosphate: step 1/1. It functions in the pathway bacterial outer membrane biogenesis; LPS lipid A biosynthesis. Functionally, catalyzes the last two sequential reactions in the de novo biosynthetic pathway for UDP-N-acetylglucosamine (UDP-GlcNAc). The C-terminal domain catalyzes the transfer of acetyl group from acetyl coenzyme A to glucosamine-1-phosphate (GlcN-1-P) to produce N-acetylglucosamine-1-phosphate (GlcNAc-1-P), which is converted into UDP-GlcNAc by the transfer of uridine 5-monophosphate (from uridine 5-triphosphate), a reaction catalyzed by the N-terminal domain. This chain is Bifunctional protein GlmU, found in Lactobacillus helveticus (strain DPC 4571).